Consider the following 250-residue polypeptide: MSDDSRPSPSGARTAAVIPAAGRGVRLGPGAPKALRALNGTPMLIHAVRAMAASRAVSLVVVVAPPDGTAEVKSLLDAHALPERTDFVVVPGGESRQESVKLGLDALPPGIDIVLVHDAARPLVPVDTVDAVIEAVRDGAPAVVPALPLADTVKQVEPAAVPGEPEPVVATPERARLRAVQTPQGFDRDTLVRAHETVTDNVTDDASMVEQLGARVVVVPGHEEAFKVTRPLDLVLAEAVLARRRLNDGF.

This sequence belongs to the IspD/TarI cytidylyltransferase family. IspD subfamily.

The catalysed reaction is 2-C-methyl-D-erythritol 4-phosphate + CTP + H(+) = 4-CDP-2-C-methyl-D-erythritol + diphosphate. It functions in the pathway isoprenoid biosynthesis; isopentenyl diphosphate biosynthesis via DXP pathway; isopentenyl diphosphate from 1-deoxy-D-xylulose 5-phosphate: step 2/6. Catalyzes the formation of 4-diphosphocytidyl-2-C-methyl-D-erythritol from CTP and 2-C-methyl-D-erythritol 4-phosphate (MEP). In Streptomyces avermitilis (strain ATCC 31267 / DSM 46492 / JCM 5070 / NBRC 14893 / NCIMB 12804 / NRRL 8165 / MA-4680), this protein is 2-C-methyl-D-erythritol 4-phosphate cytidylyltransferase.